Consider the following 305-residue polypeptide: Tetraspanin-12 (305 aa).

Topologically, residues 1–12 (MAREDSVKCLRC) are cytoplasmic. Residues Cys9 and Cys12 are each lipidated (S-palmitoyl cysteine). Residues 13–33 (LLYALNLLFWLMSISVLAVSA) traverse the membrane as a helical segment. The Extracellular segment spans residues 34–59 (WMRDYLNNVLTLTAETRVEEAVILTY). Residues 60–80 (FPVVHPVMIAVCCFLIIVGML) traverse the membrane as a helical segment. The Cytoplasmic portion of the chain corresponds to 81–89 (GYCGTVKRN). Cys83 carries the S-palmitoyl cysteine lipid modification. A helical membrane pass occupies residues 90-110 (LLLLAWYFGSLLVIFCVELAC). Residues 111 to 224 (GVWTYEQEIM…RGTKQLQVLR (114 aa)) are Extracellular-facing. A helical membrane pass occupies residues 225-245 (FLGISIGVTQILAMILTITLL). Over 246-305 (WALYYDRREPGTDQMMALKNDTTQHLPCHSVELLKPSLSRIFEHTSMANSFNTHFEMEEL) the chain is Cytoplasmic.

The protein belongs to the tetraspanin (TM4SF) family. Component of a complex, at least composed of TSPAN12, FZD4 and norrin (NDP). Interacts (when palmitoylated) with ADAM10. Interacts with MMP14/MT1-MMP. In terms of processing, palmitoylated; required for interaction with ADAM10. The precise position of palmitoylated residues is unclear and occurs either on Cys-9, Cys-12 and/or Cys-83.

The protein resides in the cell membrane. In terms of biological role, regulator of cell surface receptor signal transduction. Plays a central role in retinal vascularization by regulating norrin (NDP) signal transduction. Acts in concert with norrin (NDP) to promote FZD4 multimerization and subsequent activation of FZD4, leading to promote accumulation of beta-catenin (CTNNB1) and stimulate LEF/TCF-mediated transcriptional programs. Suprisingly, it only activates the norrin (NDP)-dependent activation of FZD4, while it does not activate the Wnt-dependent activation of FZD4, suggesting the existence of a Wnt-independent signaling that also promote accumulation the beta-catenin (CTNNB1). Acts as a regulator of membrane proteinases such as ADAM10 and MMP14/MT1-MMP. Activates ADAM10-dependent cleavage activity of amyloid precursor protein (APP). Activates MMP14/MT1-MMP-dependent cleavage activity. In Bos taurus (Bovine), this protein is Tetraspanin-12 (TSPAN12).